The sequence spans 200 residues: Holliday junction resolvase RecU (200 aa).

4 residues coordinate Mg(2+): T82, D84, E97, and Q116.

The protein belongs to the RecU family. The cofactor is Mg(2+).

It is found in the cytoplasm. The enzyme catalyses Endonucleolytic cleavage at a junction such as a reciprocal single-stranded crossover between two homologous DNA duplexes (Holliday junction).. Endonuclease that resolves Holliday junction intermediates in genetic recombination. Cleaves mobile four-strand junctions by introducing symmetrical nicks in paired strands. Promotes annealing of linear ssDNA with homologous dsDNA. Required for DNA repair, homologous recombination and chromosome segregation. The sequence is that of Holliday junction resolvase RecU from Streptococcus sanguinis (strain SK36).